The following is a 198-amino-acid chain: MTYDKDWALRWLNDFGERVQENKQLLSDLDQAIGDGDHGINMARGLSELKKAFTEKEPADLTDVFKTAGMTMVSKVGGASGPLYGTAFLNMSKAVDSETIDAEGLTKVIEAGLEGIEKRGKSHAGEKTMIDVWEPVVNALHQEDLTDDVVEAALQKTKDLKATKGRASYLGERSIGHLDPGAYSSALLFHAMLQTEVS.

Positions 6–194 (DWALRWLNDF…SALLFHAMLQ (189 aa)) constitute a DhaL domain. Residues D30, D35, and D37 each coordinate Mg(2+). ADP-binding positions include 38 to 41 (HGIN), 79 to 80 (AS), G120, M129, R166, and 179 to 181 (DPG).

In terms of assembly, homodimer. The dihydroxyacetone kinase complex is composed of a homodimer of DhaM, a homodimer of DhaK and the subunit DhaL. The cofactor is Mg(2+).

Its subcellular location is the cytoplasm. It carries out the reaction dihydroxyacetone + phosphoenolpyruvate = dihydroxyacetone phosphate + pyruvate. The protein operates within polyol metabolism; glycerol degradation. Functionally, ADP-binding subunit of the dihydroxyacetone kinase, which is responsible for the phosphoenolpyruvate (PEP)-dependent phosphorylation of dihydroxyacetone. DhaL-ADP is converted to DhaL-ATP via a phosphoryl group transfer from DhaM and transmits it to dihydroxyacetone binds to DhaK. This chain is PEP-dependent dihydroxyacetone kinase 1, ADP-binding subunit DhaL, found in Listeria innocua serovar 6a (strain ATCC BAA-680 / CLIP 11262).